The following is a 430-amino-acid chain: Glutamate-1-semialdehyde 2,1-aminomutase (430 aa).

At Lys267 the chain carries N6-(pyridoxal phosphate)lysine.

This sequence belongs to the class-III pyridoxal-phosphate-dependent aminotransferase family. HemL subfamily. As to quaternary structure, homodimer. Pyridoxal 5'-phosphate serves as cofactor.

It localises to the cytoplasm. It carries out the reaction (S)-4-amino-5-oxopentanoate = 5-aminolevulinate. Its pathway is porphyrin-containing compound metabolism; protoporphyrin-IX biosynthesis; 5-aminolevulinate from L-glutamyl-tRNA(Glu): step 2/2. This Sulfurovum sp. (strain NBC37-1) protein is Glutamate-1-semialdehyde 2,1-aminomutase.